Here is a 115-residue protein sequence, read N- to C-terminus: Ribonuclease P protein component (115 aa).

This sequence belongs to the RnpA family. As to quaternary structure, consists of a catalytic RNA component (M1 or rnpB) and a protein subunit.

The catalysed reaction is Endonucleolytic cleavage of RNA, removing 5'-extranucleotides from tRNA precursor.. Functionally, RNaseP catalyzes the removal of the 5'-leader sequence from pre-tRNA to produce the mature 5'-terminus. It can also cleave other RNA substrates such as 4.5S RNA. The protein component plays an auxiliary but essential role in vivo by binding to the 5'-leader sequence and broadening the substrate specificity of the ribozyme. The sequence is that of Ribonuclease P protein component from Phytoplasma australiense.